The chain runs to 119 residues: Large ribosomal subunit protein uL24 (119 aa).

The protein belongs to the universal ribosomal protein uL24 family. Part of the 50S ribosomal subunit.

In terms of biological role, one of two assembly initiator proteins, it binds directly to the 5'-end of the 23S rRNA, where it nucleates assembly of the 50S subunit. One of the proteins that surrounds the polypeptide exit tunnel on the outside of the subunit. The polypeptide is Large ribosomal subunit protein uL24 (Paenarthrobacter aurescens (strain TC1)).